Consider the following 420-residue polypeptide: MAP kinase-interacting serine/threonine-protein kinase 1 (420 aa).

The tract at residues Met-1–Thr-25 is disordered. Residue Ser-27 is modified to Phosphoserine; by PAK2. Positions Lys-37–Val-321 constitute a Protein kinase domain. ATP contacts are provided by residues Leu-43 to Val-51 and Lys-66. The active-site Proton acceptor is the Asp-158. 2 positions are modified to phosphoserine: Ser-168 and Ser-173. Thr-197, Thr-202, and Thr-332 each carry phosphothreonine. A disordered region spans residues Leu-386–Pro-420. Low complexity predominate over residues Leu-400–Ala-409. Residues Pro-410 to Pro-420 are compositionally biased toward pro residues.

This sequence belongs to the protein kinase superfamily. CAMK Ser/Thr protein kinase family. As to quaternary structure, interacts with the C-terminal regions of EIF4G1 and EIF4G2. Also binds to dephosphorylated ERK1 and ERK2, and to the p38 kinases. Mg(2+) is required as a cofactor. Post-translationally, dual phosphorylation of Thr-197 and Thr-202 activates the kinase. Phosphorylation of Thr-332 activates the kinase. MAPK3/ERK1 is one of the kinases which activate MKNK1/MNK1. Phosphorylation by PAK2 leads to a reduced phosphorylation of EIF4G1.

It carries out the reaction L-seryl-[protein] + ATP = O-phospho-L-seryl-[protein] + ADP + H(+). The enzyme catalyses L-threonyl-[protein] + ATP = O-phospho-L-threonyl-[protein] + ADP + H(+). With respect to regulation, phosphorylated and activated by the p38 kinases and kinases in the Erk pathway. May play a role in the response to environmental stress and cytokines. Appears to regulate translation by phosphorylating EIF4E, thus increasing the affinity of this protein for the 7-methylguanosine-containing mRNA cap. The protein is MAP kinase-interacting serine/threonine-protein kinase 1 (MKNK1) of Bos taurus (Bovine).